A 415-amino-acid chain; its full sequence is 3-isopropylmalate dehydratase large subunit (415 aa).

The [4Fe-4S] cluster site is built by C295, C353, and C356.

It belongs to the aconitase/IPM isomerase family. LeuC type 2 subfamily. In terms of assembly, heterodimer of LeuC and LeuD. Requires [4Fe-4S] cluster as cofactor.

It carries out the reaction (2R,3S)-3-isopropylmalate = (2S)-2-isopropylmalate. Its pathway is amino-acid biosynthesis; L-leucine biosynthesis; L-leucine from 3-methyl-2-oxobutanoate: step 2/4. In terms of biological role, catalyzes the isomerization between 2-isopropylmalate and 3-isopropylmalate, via the formation of 2-isopropylmaleate. The protein is 3-isopropylmalate dehydratase large subunit of Pyrobaculum aerophilum (strain ATCC 51768 / DSM 7523 / JCM 9630 / CIP 104966 / NBRC 100827 / IM2).